A 209-amino-acid polypeptide reads, in one-letter code: MSTAVLNKHLADAHEVGHDHDHAHDSGGNTVFGFWLYLMTDCVLFASVFATYAVLVHHTAGGPSGKDIFELPYVLVETAILLVSSCTYGLAMLSAHKGAKGQAIAWLGVTFLLGAAFIGMEINEFHHLIAEGFGPSRSAFLSSFFTLVGMHGLHVSAGLLWMLVLMAQIWTRGLTAQNNTRMMCLSLFWHFLDIVWICVFTVVYLMGAL.

At 1–29 (MSTAVLNKHLADAHEVGHDHDHAHDSGGN) the chain is on the cytoplasmic side. The chain crosses the membrane as a helical span at residues 30–50 (TVFGFWLYLMTDCVLFASVFA). Residues 51-72 (TYAVLVHHTAGGPSGKDIFELP) are Periplasmic-facing. Residues 73–93 (YVLVETAILLVSSCTYGLAML) traverse the membrane as a helical segment. The Cytoplasmic segment spans residues 94–102 (SAHKGAKGQ). The chain crosses the membrane as a helical span at residues 103-123 (AIAWLGVTFLLGAAFIGMEIN). The Periplasmic portion of the chain corresponds to 124-143 (EFHHLIAEGFGPSRSAFLSS). The chain crosses the membrane as a helical span at residues 144–164 (FFTLVGMHGLHVSAGLLWMLV). At 165-186 (LMAQIWTRGLTAQNNTRMMCLS) the chain is on the cytoplasmic side. The chain crosses the membrane as a helical span at residues 187-207 (LFWHFLDIVWICVFTVVYLMG). Residues 208–209 (AL) lie on the Periplasmic side of the membrane.

It belongs to the cytochrome c oxidase subunit 3 family. Heterooctamer of two A chains, two B chains, two C chains and two D chains.

The protein localises to the cell inner membrane. In terms of biological role, cytochrome bo(3) ubiquinol terminal oxidase is the component of the aerobic respiratory chain of E.coli that predominates when cells are grown at high aeration. Has proton pump activity across the membrane in addition to electron transfer, pumping 2 protons/electron. In Pseudomonas aeruginosa (strain ATCC 15692 / DSM 22644 / CIP 104116 / JCM 14847 / LMG 12228 / 1C / PRS 101 / PAO1), this protein is Cytochrome bo(3) ubiquinol oxidase subunit 3 (cyoC).